Consider the following 503-residue polypeptide: Arabinose import ATP-binding protein AraG 1 (503 aa).

ABC transporter domains follow at residues 5 to 240 (LRFD…MVGR) and 251 to 497 (RALG…LPQT). 37-44 (GENGAGKS) is an ATP binding site.

It belongs to the ABC transporter superfamily. Arabinose importer (TC 3.A.1.2.2) family. As to quaternary structure, the complex is composed of two ATP-binding proteins (AraG), two transmembrane proteins (AraH) and a solute-binding protein (AraF).

Its subcellular location is the cell inner membrane. It catalyses the reaction L-arabinose(out) + ATP + H2O = L-arabinose(in) + ADP + phosphate + H(+). Part of the ABC transporter complex AraFGH involved in arabinose import. Responsible for energy coupling to the transport system. This Burkholderia lata (strain ATCC 17760 / DSM 23089 / LMG 22485 / NCIMB 9086 / R18194 / 383) protein is Arabinose import ATP-binding protein AraG 1.